The sequence spans 101 residues: uncharacterized protein (101 aa).

A helical membrane pass occupies residues 72-94; sequence ILCPSFLNYSFINIYCFGPYTMV.

The protein localises to the membrane. This is an uncharacterized protein from Schizosaccharomyces pombe (strain 972 / ATCC 24843) (Fission yeast).